Consider the following 238-residue polypeptide: Uridylate kinase (238 aa).

ATP is bound at residue 10 to 13 (KFSG). An involved in allosteric activation by GTP region spans residues 18–23 (GDSGFG). Gly52 provides a ligand contact to UMP. ATP-binding residues include Gly53 and Arg57. Residues Asp73 and 134–141 (TGNPFFTT) each bind UMP. Thr161, Tyr167, and Asp170 together coordinate ATP.

The protein belongs to the UMP kinase family. Homohexamer.

It localises to the cytoplasm. The enzyme catalyses UMP + ATP = UDP + ADP. It functions in the pathway pyrimidine metabolism; CTP biosynthesis via de novo pathway; UDP from UMP (UMPK route): step 1/1. Its activity is regulated as follows. Allosterically activated by GTP. Inhibited by UTP. In terms of biological role, catalyzes the reversible phosphorylation of UMP to UDP. This chain is Uridylate kinase, found in Campylobacter curvus (strain 525.92).